We begin with the raw amino-acid sequence, 496 residues long: uncharacterized protein (496 aa).

D36, D81, E300, E302, D321, D323, and D375 together coordinate Mg(2+).

Belongs to the XPG/RAD2 endonuclease family. FEN1 subfamily. It depends on Mg(2+) as a cofactor.

This is an uncharacterized protein from Schizosaccharomyces pombe (strain 972 / ATCC 24843) (Fission yeast).